Reading from the N-terminus, the 94-residue chain is Beta-defensin 132 (94 aa).

Positions 1–22 (MKFLLLVLAALGFLTQVIPASA) are cleaved as a signal peptide. Disulfide bonds link Cys-27–Cys-55 and Cys-39–Cys-56. Residues 72-94 (GNHWQSRRNTQRKDKKQQTTVTS) form a disordered region. Over residues 76 to 86 (QSRRNTQRKDK) the composition is skewed to basic residues.

It belongs to the beta-defensin family.

Its subcellular location is the secreted. Functionally, has antibacterial activity. The protein is Beta-defensin 132 (DEFB132) of Gorilla gorilla gorilla (Western lowland gorilla).